A 529-amino-acid polypeptide reads, in one-letter code: Chaperonin GroEL, chloroplastic (529 aa).

Residues 29 to 32 (TLGP), 86 to 90 (DGTTT), Gly-414, 480 to 482 (DAA), and Asp-496 contribute to the ATP site.

The protein belongs to the chaperonin (HSP60) family. Forms a cylinder of 14 subunits composed of two heptameric rings stacked back-to-back. Interacts with the co-chaperonin GroES.

The protein resides in the plastid. It localises to the chloroplast. The catalysed reaction is ATP + H2O + a folded polypeptide = ADP + phosphate + an unfolded polypeptide.. Its function is as follows. Together with its co-chaperonin GroES, plays an essential role in assisting protein folding. The GroEL-GroES system forms a nano-cage that allows encapsulation of the non-native substrate proteins and provides a physical environment optimized to promote and accelerate protein folding. The protein is Chaperonin GroEL, chloroplastic of Guillardia theta (Cryptophyte).